The following is a 257-amino-acid chain: Homeobox protein goosecoid (257 aa).

Positions 160–219 (KRRHRTIFTDEQLEALENLFQETKYPDVGTREQLARKVHLREEKVEVWFKNRRAKWRRQK) form a DNA-binding region, homeobox. Residues 213–257 (AKWRRQKRSSSEESENAEKWNKTSSSKASPEKREEEGKSDLDSDS) are disordered. Basic and acidic residues predominate over residues 241 to 257 (SPEKREEEGKSDLDSDS).

This sequence belongs to the paired homeobox family. Bicoid subfamily.

It is found in the nucleus. In terms of biological role, regulates chordin (CHRD). May play a role in spatial programing within discrete embryonic fields or lineage compartments during organogenesis. In concert with NKX3-2, plays a role in defining the structural components of the middle ear; required for the development of the entire tympanic ring. Probably involved in the regulatory networks that define neural crest cell fate specification and determine mesoderm cell lineages in mammals. This Homo sapiens (Human) protein is Homeobox protein goosecoid (GSC).